Reading from the N-terminus, the 191-residue chain is MKIGVLALQGAVREHIHHIELSGHEGVAIKRIEQLEEIDGLILPGGESTTLRRLMNLYGFKEALQQSTLPMFGTCAGLIVMAKQISGEDGYLDKLDITVQRNSFGRQVDSFESELDVKGIAEDIEGVFIRAPHIEATHGDVDVLSTVGDKIVAVQEGRYLGVSFHPELTDDYRVTQYFIEAIVKPTLTEKV.

46-48 (GES) contributes to the L-glutamine binding site. Cysteine 75 acts as the Nucleophile in catalysis. L-glutamine-binding positions include arginine 101 and 129-130 (IR). Active-site charge relay system residues include histidine 165 and glutamate 167.

This sequence belongs to the glutaminase PdxT/SNO family. In the presence of PdxS, forms a dodecamer of heterodimers. Only shows activity in the heterodimer.

It carries out the reaction aldehydo-D-ribose 5-phosphate + D-glyceraldehyde 3-phosphate + L-glutamine = pyridoxal 5'-phosphate + L-glutamate + phosphate + 3 H2O + H(+). The enzyme catalyses L-glutamine + H2O = L-glutamate + NH4(+). It participates in cofactor biosynthesis; pyridoxal 5'-phosphate biosynthesis. Functionally, catalyzes the hydrolysis of glutamine to glutamate and ammonia as part of the biosynthesis of pyridoxal 5'-phosphate. The resulting ammonia molecule is channeled to the active site of PdxS. This is Pyridoxal 5'-phosphate synthase subunit PdxT from Staphylococcus saprophyticus subsp. saprophyticus (strain ATCC 15305 / DSM 20229 / NCIMB 8711 / NCTC 7292 / S-41).